We begin with the raw amino-acid sequence, 320 residues long: Malate dehydrogenase (320 aa).

Residues Gly-10–Gly-15 and Asp-34 each bind NAD(+). Substrate-binding residues include Arg-83 and Arg-89. NAD(+)-binding positions include Asn-96 and Ile-119 to Asn-121. Positions 121 and 152 each coordinate substrate. The Proton acceptor role is filled by His-176.

Belongs to the LDH/MDH superfamily. MDH type 3 family.

The enzyme catalyses (S)-malate + NAD(+) = oxaloacetate + NADH + H(+). Functionally, catalyzes the reversible oxidation of malate to oxaloacetate. In Agrobacterium fabrum (strain C58 / ATCC 33970) (Agrobacterium tumefaciens (strain C58)), this protein is Malate dehydrogenase.